The following is a 561-amino-acid chain: Dihydroxy-acid dehydratase 3 (561 aa).

Cys50 serves as a coordination point for [2Fe-2S] cluster. Asp82 is a Mg(2+) binding site. Cys123 contacts [2Fe-2S] cluster. Mg(2+) contacts are provided by Asp124 and Lys125. Lys125 is subject to N6-carboxylysine. Cys195 lines the [2Fe-2S] cluster pocket. Mg(2+) is bound at residue Glu447. The Proton acceptor role is filled by Ser473.

Belongs to the IlvD/Edd family. Homodimer. [2Fe-2S] cluster is required as a cofactor. Requires Mg(2+) as cofactor.

It carries out the reaction (2R)-2,3-dihydroxy-3-methylbutanoate = 3-methyl-2-oxobutanoate + H2O. The enzyme catalyses (2R,3R)-2,3-dihydroxy-3-methylpentanoate = (S)-3-methyl-2-oxopentanoate + H2O. It participates in amino-acid biosynthesis; L-isoleucine biosynthesis; L-isoleucine from 2-oxobutanoate: step 3/4. It functions in the pathway amino-acid biosynthesis; L-valine biosynthesis; L-valine from pyruvate: step 3/4. In terms of biological role, functions in the biosynthesis of branched-chain amino acids. Catalyzes the dehydration of (2R,3R)-2,3-dihydroxy-3-methylpentanoate (2,3-dihydroxy-3-methylvalerate) into 2-oxo-3-methylpentanoate (2-oxo-3-methylvalerate) and of (2R)-2,3-dihydroxy-3-methylbutanoate (2,3-dihydroxyisovalerate) into 2-oxo-3-methylbutanoate (2-oxoisovalerate), the penultimate precursor to L-isoleucine and L-valine, respectively. This Bordetella bronchiseptica (strain ATCC BAA-588 / NCTC 13252 / RB50) (Alcaligenes bronchisepticus) protein is Dihydroxy-acid dehydratase 3.